The chain runs to 95 residues: Selenoprotein K (95 aa).

A helical transmembrane segment spans residues L20 to I42. The disordered stretch occupies residues R48 to R95. Position 93 (U93) is a non-standard amino acid, selenocysteine.

It belongs to the selenoprotein K family.

The protein localises to the endoplasmic reticulum membrane. The protein resides in the cell membrane. Functionally, required for Ca(2+) flux in immune cells and plays a role in T-cell proliferation and in T-cell and neutrophil migration. Involved in endoplasmic reticulum-associated degradation (ERAD) of soluble glycosylated proteins. Required for cell surface expression of CD36 and involved in macrophage uptake of low-density lipoprotein and in foam cell formation. Required for palmitoylation. The polypeptide is Selenoprotein K (selenok) (Xenopus tropicalis (Western clawed frog)).